We begin with the raw amino-acid sequence, 262 residues long: 4-hydroxy-2-oxo-heptane-1,7-dioate aldolase (262 aa).

H45 (proton acceptor) is an active-site residue. Q147 is a substrate binding site. Position 149 (E149) interacts with a divalent metal cation. A174 and D175 together coordinate substrate. D175 serves as a coordination point for a divalent metal cation.

This sequence belongs to the HpcH/HpaI aldolase family. In terms of assembly, homohexamer; trimer of dimers. The cofactor is a divalent metal cation.

The catalysed reaction is 4-hydroxy-2-oxoheptanedioate = succinate semialdehyde + pyruvate. The enzyme catalyses D-glyceraldehyde + 3-hydroxypyruvate = (3R,4S,5R)-3,4,5,6-tetrahydroxy-2-oxohexanoate. It carries out the reaction D-glyceraldehyde + 3-hydroxypyruvate = 2-dehydro-D-gluconate. It catalyses the reaction D-glyceraldehyde + 3-hydroxypyruvate = 2-dehydro-D-galactonate. The catalysed reaction is D-glyceraldehyde + pyruvate = 2-dehydro-3-deoxy-L-galactonate. The enzyme catalyses 2-dehydro-3-deoxy-D-gluconate = D-glyceraldehyde + pyruvate. The protein operates within aromatic compound metabolism; 4-hydroxyphenylacetate degradation; pyruvate and succinate semialdehyde from 4-hydroxyphenylacetate: step 7/7. In terms of biological role, catalyzes the reversible retro-aldol cleavage of 4-hydroxy-2-ketoheptane-1,7-dioate (HKHD) to pyruvate and succinic semialdehyde. In vitro, can catalyze the aldolisation reaction between hydroxypyruvate (HPA) or pyruvate (PA) and D-glyceraldehyde (D-GA). The condensation of hydroxypyruvate and D-glyceraldehyde produces (3R,4S,5R)-3,4,5,6-tetrahydroxy-2-oxohexanoate as the major product, 2-dehydro-D-gluconate and 2-dehydro-D-galactonate. The condensation of pyruvate and D-glyceraldehyde produces 2-dehydro-3-deoxy-L-galactonate as the major product and 2-dehydro-3-deoxy-D-gluconate. This chain is 4-hydroxy-2-oxo-heptane-1,7-dioate aldolase, found in Escherichia coli (strain ATCC 8739 / DSM 1576 / NBRC 3972 / NCIMB 8545 / WDCM 00012 / Crooks).